Here is a 403-residue protein sequence, read N- to C-terminus: GPI-N-acetylgalactosamine transferase PGAP4 (403 aa).

Residues 1 to 22 (MTTSTSPAAMLLRRLRRLSWGS) are Cytoplasmic-facing. The helical transmembrane segment at 23-43 (TAVQLFILTVVTFGLLAPLAC) threads the bilayer. At 44-264 (HRLLHSYFYL…INPEPMRILE (221 aa)) the chain is on the lumenal side. UDP-N-acetyl-alpha-D-galactosamine is bound at residue V109. Cystine bridges form between C132–C136 and C144–C194. The DXD motif motif lies at 211–213 (EDD). A helical transmembrane segment spans residues 265-285 (WVGVGMLLGPVLTWIYMRFAC). Residues 286-287 (RP) are Cytoplasmic-facing. A helical transmembrane segment spans residues 288-308 (GFSWPVMLFFCLYSMGLVELV). Topologically, residues 309-403 (GRHYFLELRR…LRYNFHPSLL (95 aa)) are lumenal. A disulfide bridge links C332 with C333. Positions 334, 335, and 362 each coordinate UDP-N-acetyl-alpha-D-galactosamine.

The protein belongs to the PGAP4 family. In terms of processing, glycosylated.

The protein resides in the golgi apparatus membrane. Functionally, golgi-resident glycosylphosphatidylinositol (GPI)-N-acetylgalactosamine transferase that catalyzes the N-acetyl-beta-D-galactosamine transfer from an UDP-N-acetyl-alpha-D-galactosamine to the 4-OH-position of first mannose of the glycosylphosphatidylinositol (GPI) of a GPI-anchored protein (GPI-AP). This modification occurs after the fatty acid remodeling step of the GPI-anchor maturation. This chain is GPI-N-acetylgalactosamine transferase PGAP4, found in Mus musculus (Mouse).